The sequence spans 433 residues: C4-dicarboxylate transport protein (433 aa).

8 helical membrane-spanning segments follow: residues 8-28 (ILYV…HFWP), 44-64 (LIKM…IAGM), 78-98 (LLYF…AAHL), 148-168 (GDIL…AVLG), 188-208 (IVHV…AFTI), 222-242 (LIGT…GTIA), 307-327 (IYMT…LTLM), and 355-375 (AATL…ILGI).

This sequence belongs to the dicarboxylate/amino acid:cation symporter (DAACS) (TC 2.A.23) family.

It is found in the cell inner membrane. In terms of biological role, responsible for the transport of dicarboxylates such as succinate, fumarate, and malate from the periplasm across the membrane. The protein is C4-dicarboxylate transport protein of Cupriavidus taiwanensis (strain DSM 17343 / BCRC 17206 / CCUG 44338 / CIP 107171 / LMG 19424 / R1) (Ralstonia taiwanensis (strain LMG 19424)).